The chain runs to 747 residues: Cyclic di-GMP phosphodiesterase PdeF (747 aa).

At 1–14 the chain is on the periplasmic side; that stretch reads MKLNATYIKIRDKW. A helical membrane pass occupies residues 15-36; the sequence is WGLPLFLPSLILPIFAHINTFA. Residues 37 to 42 lie on the Cytoplasmic side of the membrane; that stretch reads HISSGE. Residues 43–65 traverse the membrane as a helical segment; it reads VFLFYLPLALMISMMMFFSWAAL. The Periplasmic segment spans residues 66-79; sequence PGIALGIFVRKYAE. A helical transmembrane segment spans residues 80-102; that stretch reads LGFYETLSLTANFIIIIILCWGG. The Cytoplasmic portion of the chain corresponds to 103 to 128; the sequence is YRVFTPRRNNVSHGDTRLISQRIFWQ. A helical transmembrane segment spans residues 129–151; that stretch reads IVFPATLFLILFQFAAFVGLLAS. Residues 152–165 are Periplasmic-facing; the sequence is RENLVGVMPFNLGT. A helical membrane pass occupies residues 166-188; the sequence is LINYQALLVGNLIGVPLCYFIIR. The Cytoplasmic portion of the chain corresponds to 189–215; sequence VVRNPFYLRSYYSQLKQQVDAKVTKKE. A helical membrane pass occupies residues 216 to 235; it reads FALWLLALGALLLLLCMPLN. Over 236–239 the chain is Periplasmic; sequence EKST. Residues 240 to 259 form a helical membrane-spanning segment; the sequence is IFSTNYTLSLLLPLMMWGAM. Residues 260-265 are Cytoplasmic-facing; that stretch reads RYGYKL. A helical transmembrane segment spans residues 266-285; it reads ISLLWAVVLMISIHSYQNYI. Topologically, residues 286 to 294 are periplasmic; the sequence is PIYPGYTTQ. A helical transmembrane segment spans residues 295 to 317; that stretch reads LTITSSSYLVFSFIVNYMAVLAT. Residues 318–747 are Cytoplasmic-facing; the sequence is RQRAVVRRIQ…NEIEPIRESA (430 aa). The EAL domain occupies 493 to 744; the sequence is KVAMMNRLQQ…DTLNEIEPIR (252 aa).

The cofactor is Mg(2+). It depends on Mn(2+) as a cofactor.

Its subcellular location is the cell inner membrane. The catalysed reaction is 3',3'-c-di-GMP + H2O = 5'-phosphoguanylyl(3'-&gt;5')guanosine + H(+). With respect to regulation, inhibited by pGpG. Its function is as follows. Phosphodiesterase (PDE) that catalyzes the hydrolysis of cyclic-di-GMP (c-di-GMP) to 5'-pGpG. Truncated proteins consisting of the GGDEF/EAL domains (residues 319-747) or of the EAL domain alone (481-747) have c-di-GMP phosphodiesterase activity. They do not have diguanylate cyclase activity. Cyclic-di-GMP is a second messenger which controls cell surface-associated traits in bacteria. The sequence is that of Cyclic di-GMP phosphodiesterase PdeF from Escherichia coli (strain K12).